We begin with the raw amino-acid sequence, 43 residues long: Probable intron-encoded DNA endonuclease 2 (43 aa).

This sequence belongs to the LAGLIDADG endonuclease family.

It localises to the mitochondrion. In terms of biological role, mitochondrial DNA endonuclease involved in intron homing. The protein is Probable intron-encoded DNA endonuclease 2 (hegI2) of Mycosarcoma maydis (Corn smut fungus).